A 222-amino-acid chain; its full sequence is 2-C-methyl-D-erythritol 4-phosphate cytidylyltransferase (222 aa).

The protein belongs to the IspD/TarI cytidylyltransferase family. IspD subfamily.

The catalysed reaction is 2-C-methyl-D-erythritol 4-phosphate + CTP + H(+) = 4-CDP-2-C-methyl-D-erythritol + diphosphate. It functions in the pathway isoprenoid biosynthesis; isopentenyl diphosphate biosynthesis via DXP pathway; isopentenyl diphosphate from 1-deoxy-D-xylulose 5-phosphate: step 2/6. Functionally, catalyzes the formation of 4-diphosphocytidyl-2-C-methyl-D-erythritol from CTP and 2-C-methyl-D-erythritol 4-phosphate (MEP). This is 2-C-methyl-D-erythritol 4-phosphate cytidylyltransferase from Thermotoga sp. (strain RQ2).